The primary structure comprises 33 residues: Photosystem II reaction center protein T (33 aa).

A helical transmembrane segment spans residues 3 to 23 (ALVYTFLLVSTLGILFFSIFF).

This sequence belongs to the PsbT family. As to quaternary structure, PSII is composed of 1 copy each of membrane proteins PsbA, PsbB, PsbC, PsbD, PsbE, PsbF, PsbH, PsbI, PsbJ, PsbK, PsbL, PsbM, PsbT, PsbY, PsbZ, Psb30/Ycf12, at least 3 peripheral proteins of the oxygen-evolving complex and a large number of cofactors. It forms dimeric complexes.

The protein localises to the plastid. It localises to the chloroplast thylakoid membrane. Its function is as follows. Found at the monomer-monomer interface of the photosystem II (PS II) dimer, plays a role in assembly and dimerization of PSII. PSII is a light-driven water plastoquinone oxidoreductase, using light energy to abstract electrons from H(2)O, generating a proton gradient subsequently used for ATP formation. This chain is Photosystem II reaction center protein T, found in Pelargonium hortorum (Common geranium).